A 508-amino-acid chain; its full sequence is Potassium/proton antiporter CemA (508 aa).

Transmembrane regions (helical) follow at residues 66–86 (LFII…LNLL), 282–302 (YQAL…WIIS), 386–406 (ILHL…FILG), 433–453 (ILLL…EVVI), and 468–488 (IISC…KYWI).

It belongs to the CemA family.

The protein resides in the plastid. It localises to the chloroplast inner membrane. It carries out the reaction K(+)(in) + H(+)(out) = K(+)(out) + H(+)(in). Contributes to K(+)/H(+) antiport activity by supporting proton efflux to control proton extrusion and homeostasis in chloroplasts in a light-dependent manner to modulate photosynthesis. Prevents excessive induction of non-photochemical quenching (NPQ) under continuous-light conditions. Indirectly promotes efficient inorganic carbon uptake into chloroplasts. This Anthoceros angustus (Hornwort) protein is Potassium/proton antiporter CemA.